Reading from the N-terminus, the 154-residue chain is Small ribosomal subunit protein uS19B (154 aa).

Serine 63 carries the phosphoserine modification.

The protein belongs to the universal ribosomal protein uS19 family. In terms of assembly, component of the small ribosomal subunit (SSU). Mature yeast ribosomes consist of a small (40S) and a large (60S) subunit. The 40S small subunit contains 1 molecule of ribosomal RNA (18S rRNA) and at least 33 different proteins. The large 60S subunit contains 3 rRNA molecules (25S, 5.8S and 5S rRNA) and at least 46 different proteins.

Its subcellular location is the cytoplasm. It localises to the nucleus. It is found in the nucleolus. Component of the ribosome, a large ribonucleoprotein complex responsible for the synthesis of proteins in the cell. The small ribosomal subunit (SSU) binds messenger RNAs (mRNAs) and translates the encoded message by selecting cognate aminoacyl-transfer RNA (tRNA) molecules. The large subunit (LSU) contains the ribosomal catalytic site termed the peptidyl transferase center (PTC), which catalyzes the formation of peptide bonds, thereby polymerizing the amino acids delivered by tRNAs into a polypeptide chain. The nascent polypeptides leave the ribosome through a tunnel in the LSU and interact with protein factors that function in enzymatic processing, targeting, and the membrane insertion of nascent chains at the exit of the ribosomal tunnel. uS19 is involved in the nuclear export of the small ribosomal subunit precursor. Has a role in the late stage of the assembly of pre-40S particles within the nucleus and controls their export to the cytoplasm. The chain is Small ribosomal subunit protein uS19B (rps1502) from Schizosaccharomyces pombe (strain 972 / ATCC 24843) (Fission yeast).